The following is a 305-amino-acid chain: Orotidine 5'-phosphate decarboxylase (305 aa).

Catalysis depends on Lys-108, which acts as the Proton donor.

The protein belongs to the OMP decarboxylase family. Type 2 subfamily.

It catalyses the reaction orotidine 5'-phosphate + H(+) = UMP + CO2. It participates in pyrimidine metabolism; UMP biosynthesis via de novo pathway; UMP from orotate: step 2/2. This chain is Orotidine 5'-phosphate decarboxylase, found in Caldicellulosiruptor bescii (strain ATCC BAA-1888 / DSM 6725 / KCTC 15123 / Z-1320) (Anaerocellum thermophilum).